Reading from the N-terminus, the 156-residue chain is Small ribosomal subunit protein uS7 (156 aa).

The protein belongs to the universal ribosomal protein uS7 family. As to quaternary structure, part of the 30S ribosomal subunit. Contacts proteins S9 and S11.

One of the primary rRNA binding proteins, it binds directly to 16S rRNA where it nucleates assembly of the head domain of the 30S subunit. Is located at the subunit interface close to the decoding center, probably blocks exit of the E-site tRNA. The chain is Small ribosomal subunit protein uS7 from Geobacter metallireducens (strain ATCC 53774 / DSM 7210 / GS-15).